Reading from the N-terminus, the 820-residue chain is Catenin beta (820 aa).

The span at 1–16 shows a compositional bias: polar residues; that stretch reads MEQARYSNQQSVNPQQ. Residues 1 to 74 form a disordered region; it reads MEQARYSNQQ…SRHEDGGEEA (74 aa). The segment covering 52-63 has biased composition (low complexity); that stretch reads SSATSHPPSVSS. ARM repeat units follow at residues 157 to 196, 199 to 239, 241 to 280, 283 to 322, 367 to 405, 406 to 445, 448 to 489, 495 to 535, 603 to 642, and 644 to 683; these read NYQD…QLSK, ASRH…NLSH, RAGL…NLLL, EGSK…ILAY, HNNK…RNLS, DCHR…NLTC, SRNK…HVTS, EMGQ…NLAL, SHNR…ELSL, and KQGA…RMSD. Positions 708–811 are disordered; the sequence is PWGDPLDMPS…LDSIPPADNT (104 aa). Over residues 785–796 the composition is skewed to low complexity; sequence GMDPGLPDMGPP.

The protein belongs to the beta-catenin family.

The protein resides in the cytoplasm. Its subcellular location is the cytoskeleton. Its function is as follows. Binds to the cytoplasmic domain of the cell-cell adhesion molecule E-cadherin, and perhaps to other (membrane) proteins. The association of catenins to cadherins produces a complex which is linked to the actin filament network, and which seems to be of primary importance for cadherins cell-adhesion properties. The sequence is that of Catenin beta from Tripneustes gratilla (Hawaian sea urchin).